Here is a 593-residue protein sequence, read N- to C-terminus: Probable E3 ubiquitin-protein ligase ARI2 (593 aa).

Residues 120–334 (SMMSCDICVE…ISGHSCGRFQ (215 aa)) are TRIAD supradomain. Zn(2+) is bound by residues Cys-124, Cys-127, Cys-141, His-143, Cys-146, Cys-149, Cys-168, Cys-173, Cys-215, Cys-221, Cys-237, Cys-239, Cys-244, Cys-247, His-252, Cys-257, Cys-284, and Cys-287. The segment at 124–173 (CDICVEDVPGYQLTRMDCGHSFCNNCWTGHFTVKINEGQSKRIICMAHKC) adopts an RING-type 1 zinc-finger fold. The IBR-type zinc-finger motif lies at 195-257 (EKFDRFLLES…SSQAHSPCSC (63 aa)). Residues 284 to 312 (CPKCHKPVEKNGGCNLVTCLCRQSFCWLC) form an RING-type 2; atypical zinc finger. Cys-297 is a catalytic residue. Zn(2+) contacts are provided by Cys-302, Cys-304, Cys-309, Cys-312, His-320, and Cys-330.

Belongs to the RBR family. Ariadne subfamily. Zn(2+) serves as cofactor. As to expression, ubiquitous.

The enzyme catalyses [E2 ubiquitin-conjugating enzyme]-S-ubiquitinyl-L-cysteine + [acceptor protein]-L-lysine = [E2 ubiquitin-conjugating enzyme]-L-cysteine + [acceptor protein]-N(6)-ubiquitinyl-L-lysine.. It participates in protein modification; protein ubiquitination. Its function is as follows. Might act as an E3 ubiquitin-protein ligase, or as part of E3 complex, which accepts ubiquitin from specific E2 ubiquitin-conjugating enzymes and then transfers it to substrates. In Arabidopsis thaliana (Mouse-ear cress), this protein is Probable E3 ubiquitin-protein ligase ARI2 (ARI2).